We begin with the raw amino-acid sequence, 397 residues long: S-adenosylmethionine synthase (397 aa).

H15 contacts ATP. A Mg(2+)-binding site is contributed by D17. E43 contacts K(+). Residues E56 and Q99 each coordinate L-methionine. The flexible loop stretch occupies residues 99 to 109; sequence QSPDIAQGVTA. ATP-binding positions include 173 to 175, 242 to 243, D251, 257 to 258, A274, and K278; these read DGK, KF, and RK. D251 serves as a coordination point for L-methionine. An L-methionine-binding site is contributed by K282.

Belongs to the AdoMet synthase family. As to quaternary structure, homotetramer; dimer of dimers. Mg(2+) serves as cofactor. K(+) is required as a cofactor.

The protein resides in the cytoplasm. The enzyme catalyses L-methionine + ATP + H2O = S-adenosyl-L-methionine + phosphate + diphosphate. The protein operates within amino-acid biosynthesis; S-adenosyl-L-methionine biosynthesis; S-adenosyl-L-methionine from L-methionine: step 1/1. Catalyzes the formation of S-adenosylmethionine (AdoMet) from methionine and ATP. The overall synthetic reaction is composed of two sequential steps, AdoMet formation and the subsequent tripolyphosphate hydrolysis which occurs prior to release of AdoMet from the enzyme. In Cutibacterium acnes (strain DSM 16379 / KPA171202) (Propionibacterium acnes), this protein is S-adenosylmethionine synthase.